The primary structure comprises 432 residues: Proline--tRNA ligase (432 aa).

Belongs to the class-II aminoacyl-tRNA synthetase family. ProS type 2 subfamily. In terms of assembly, homodimer.

It is found in the cytoplasm. The catalysed reaction is tRNA(Pro) + L-proline + ATP = L-prolyl-tRNA(Pro) + AMP + diphosphate. Its function is as follows. Catalyzes the attachment of proline to tRNA(Pro) in a two-step reaction: proline is first activated by ATP to form Pro-AMP and then transferred to the acceptor end of tRNA(Pro). The chain is Proline--tRNA ligase from Rickettsia bellii (strain OSU 85-389).